The primary structure comprises 518 residues: Putative cysteine ligase BshC (518 aa).

Positions 404 to 474 (AAASAERLAA…RARQLTRLKR (71 aa)) form a coiled coil.

This sequence belongs to the BshC family.

This chain is Putative cysteine ligase BshC, found in Deinococcus geothermalis (strain DSM 11300 / CIP 105573 / AG-3a).